The sequence spans 113 residues: U11-theraphotoxin-Hhn1a (113 aa).

The first 21 residues, 1–21 (MNTVRVTFLLVFVLAVSLGQA), serve as a signal peptide directing secretion. Positions 22–74 (DKDENRMEMQEKTEQGNSYLDFAENLLLQKLEELEAKLLEEDSEESRNSRQKR) are excised as a propeptide. Positions 60 to 69 (LEEDSEESRN) are enriched in basic and acidic residues. Residues 60 to 83 (LEEDSEESRNSRQKRCIGEGVPCD) form a disordered region. 3 disulfide bridges follow: C75–C90, C82–C95, and C89–C110.

This sequence belongs to the neurotoxin 14 (magi-1) family. 01 (HNTX-16) subfamily. As to expression, expressed by the venom gland.

It is found in the secreted. Functionally, probable ion channel inhibitor. The sequence is that of U11-theraphotoxin-Hhn1a from Cyriopagopus hainanus (Chinese bird spider).